A 255-amino-acid chain; its full sequence is Cytochrome c oxidase subunit 2 (255 aa).

Residues 1-16 (MFNLFPPFGANTAIFN) form the signal peptide. Residues 17-43 (DAPQPWQVGFQDGASPTQEGITELHDS) lie on the Mitochondrial intermembrane side of the membrane. The chain crosses the membrane as a helical span at residues 44–64 (IFFYLVIICFGVLWVLSSVIV). Residues 65–80 (NFNSNKSQLVYKYANH) are Mitochondrial matrix-facing. Residues 81-101 (GTLIELIWTITPALVLIAIAF) form a helical membrane-spanning segment. At 102–255 (PSFKLLYLMD…KYLAWIDSQA (154 aa)) the chain is on the mitochondrial intermembrane side. H189, C224, E226, C228, H232, and M235 together coordinate Cu cation. E226 is a Mg(2+) binding site.

This sequence belongs to the cytochrome c oxidase subunit 2 family. Component of the cytochrome c oxidase (complex IV, CIV), a multisubunit enzyme composed of a catalytic core of 3 subunits and several supernumerary subunits. The complex exists as a monomer or a dimer and forms supercomplexes (SCs) in the inner mitochondrial membrane with ubiquinol-cytochrome c oxidoreductase (cytochrome b-c1 complex, complex III, CIII). Cu cation is required as a cofactor.

It localises to the mitochondrion inner membrane. The enzyme catalyses 4 Fe(II)-[cytochrome c] + O2 + 8 H(+)(in) = 4 Fe(III)-[cytochrome c] + 2 H2O + 4 H(+)(out). Functionally, component of the cytochrome c oxidase, the last enzyme in the mitochondrial electron transport chain which drives oxidative phosphorylation. The respiratory chain contains 3 multisubunit complexes succinate dehydrogenase (complex II, CII), ubiquinol-cytochrome c oxidoreductase (cytochrome b-c1 complex, complex III, CIII) and cytochrome c oxidase (complex IV, CIV), that cooperate to transfer electrons derived from NADH and succinate to molecular oxygen, creating an electrochemical gradient over the inner membrane that drives transmembrane transport and the ATP synthase. Cytochrome c oxidase is the component of the respiratory chain that catalyzes the reduction of oxygen to water. Electrons originating from reduced cytochrome c in the intermembrane space (IMS) are transferred via the dinuclear copper A center (CU(A)) of subunit 2 and heme A of subunit 1 to the active site in subunit 1, a binuclear center (BNC) formed by heme A3 and copper B (CU(B)). The BNC reduces molecular oxygen to 2 water molecules using 4 electrons from cytochrome c in the IMS and 4 protons from the mitochondrial matrix. The polypeptide is Cytochrome c oxidase subunit 2 (COX2) (Mycosarcoma maydis (Corn smut fungus)).